The sequence spans 401 residues: Acetate kinase (401 aa).

Position 9 (asparagine 9) interacts with Mg(2+). Position 16 (lysine 16) interacts with ATP. Arginine 88 contacts substrate. Aspartate 147 (proton donor/acceptor) is an active-site residue. Residues 207 to 211, 282 to 284, and 333 to 337 each bind ATP; these read HLGNG, DCR, and GIGEN. Residue glutamate 388 coordinates Mg(2+).

The protein belongs to the acetokinase family. Homodimer. The cofactor is Mg(2+). Requires Mn(2+) as cofactor.

It localises to the cytoplasm. It catalyses the reaction acetate + ATP = acetyl phosphate + ADP. Its pathway is metabolic intermediate biosynthesis; acetyl-CoA biosynthesis; acetyl-CoA from acetate: step 1/2. Catalyzes the formation of acetyl phosphate from acetate and ATP. Can also catalyze the reverse reaction. This chain is Acetate kinase, found in Haemophilus influenzae (strain PittEE).